The following is a 397-amino-acid chain: Ribosomal RNA large subunit methyltransferase I (397 aa).

Residues 2-80 enclose the PUA domain; it reads AIRIKLKPGR…KEEAIDADFF (79 aa).

Belongs to the methyltransferase superfamily. RlmI family.

It localises to the cytoplasm. The enzyme catalyses cytidine(1962) in 23S rRNA + S-adenosyl-L-methionine = 5-methylcytidine(1962) in 23S rRNA + S-adenosyl-L-homocysteine + H(+). Functionally, specifically methylates the cytosine at position 1962 (m5C1962) of 23S rRNA. The polypeptide is Ribosomal RNA large subunit methyltransferase I (Shewanella denitrificans (strain OS217 / ATCC BAA-1090 / DSM 15013)).